Reading from the N-terminus, the 507-residue chain is ATP synthase subunit alpha, chloroplastic (507 aa).

170–177 provides a ligand contact to ATP; the sequence is GDRQTGKT.

Belongs to the ATPase alpha/beta chains family. F-type ATPases have 2 components, CF(1) - the catalytic core - and CF(0) - the membrane proton channel. CF(1) has five subunits: alpha(3), beta(3), gamma(1), delta(1), epsilon(1). CF(0) has four main subunits: a, b, b' and c.

The protein localises to the plastid. Its subcellular location is the chloroplast thylakoid membrane. It catalyses the reaction ATP + H2O + 4 H(+)(in) = ADP + phosphate + 5 H(+)(out). In terms of biological role, produces ATP from ADP in the presence of a proton gradient across the membrane. The alpha chain is a regulatory subunit. In Nicotiana sylvestris (Wood tobacco), this protein is ATP synthase subunit alpha, chloroplastic.